Consider the following 356-residue polypeptide: Protein RecA (356 aa).

ATP is bound at residue G68–T75.

It belongs to the RecA family.

Its subcellular location is the cytoplasm. In terms of biological role, can catalyze the hydrolysis of ATP in the presence of single-stranded DNA, the ATP-dependent uptake of single-stranded DNA by duplex DNA, and the ATP-dependent hybridization of homologous single-stranded DNAs. It interacts with LexA causing its activation and leading to its autocatalytic cleavage. The polypeptide is Protein RecA (Thermotoga maritima (strain ATCC 43589 / DSM 3109 / JCM 10099 / NBRC 100826 / MSB8)).